A 96-amino-acid polypeptide reads, in one-letter code: Co-chaperonin GroES (96 aa).

Belongs to the GroES chaperonin family. As to quaternary structure, heptamer of 7 subunits arranged in a ring. Interacts with the chaperonin GroEL.

Its subcellular location is the cytoplasm. Functionally, together with the chaperonin GroEL, plays an essential role in assisting protein folding. The GroEL-GroES system forms a nano-cage that allows encapsulation of the non-native substrate proteins and provides a physical environment optimized to promote and accelerate protein folding. GroES binds to the apical surface of the GroEL ring, thereby capping the opening of the GroEL channel. In Neisseria meningitidis serogroup A / serotype 4A (strain DSM 15465 / Z2491), this protein is Co-chaperonin GroES.